The chain runs to 67 residues: DNA-directed RNA polymerase subunit omega (67 aa).

This sequence belongs to the RNA polymerase subunit omega family. The RNAP catalytic core consists of 2 alpha, 1 beta, 1 beta' and 1 omega subunit. When a sigma factor is associated with the core the holoenzyme is formed, which can initiate transcription.

It carries out the reaction RNA(n) + a ribonucleoside 5'-triphosphate = RNA(n+1) + diphosphate. Promotes RNA polymerase assembly. Latches the N- and C-terminal regions of the beta' subunit thereby facilitating its interaction with the beta and alpha subunits. The chain is DNA-directed RNA polymerase subunit omega (rpoZ) from Treponema pallidum (strain Nichols).